The sequence spans 167 residues: uncharacterized protein (167 aa).

This is an uncharacterized protein from Acidianus bottle-shaped virus (isolate Italy/Pozzuoli) (ABV).